A 286-amino-acid chain; its full sequence is MQKLTLPAPAKLNLWLHIIGRRADGYHELETVFQFLDHGDELSFALRDDGVIRLHTEIEAVPHDSNLIVRAARMLQAQSGTTLGADIWLTKVLPMGGGIGGGSSDAATTLLALAHLWQLDWDEDRLAALGLSLGADVPVFVRGHAAFAQGVGEQLTPVDPIEPWYVVLVPQVSVSTVEIFSHPQLTRDSLPLKMRPVPEGNSRNDCQPVVEQNYPEVRNALNSLGKFTEARLTGTGSCVFGAFPSKAEADKVLALLSATQTGFVAKGSNVSMLHRKLQSLVKKSSA.

Residue lysine 11 is part of the active site. 94–104 (PMGGGIGGGSS) is a binding site for ATP. Aspartate 136 is a catalytic residue.

This sequence belongs to the GHMP kinase family. IspE subfamily.

The enzyme catalyses 4-CDP-2-C-methyl-D-erythritol + ATP = 4-CDP-2-C-methyl-D-erythritol 2-phosphate + ADP + H(+). It participates in isoprenoid biosynthesis; isopentenyl diphosphate biosynthesis via DXP pathway; isopentenyl diphosphate from 1-deoxy-D-xylulose 5-phosphate: step 3/6. Catalyzes the phosphorylation of the position 2 hydroxy group of 4-diphosphocytidyl-2C-methyl-D-erythritol. This chain is 4-diphosphocytidyl-2-C-methyl-D-erythritol kinase, found in Pseudomonas putida (strain ATCC 47054 / DSM 6125 / CFBP 8728 / NCIMB 11950 / KT2440).